We begin with the raw amino-acid sequence, 331 residues long: MINTSIPLVDLHRHLDGNVRVNTIWELGHQHGIALPADSLETLAPFVQIQGKETSLVAFLKKLDWMVAVLADLDAVKRVAYENVADAALSGLDYAELRFSPYYMAMNHKLPIEGVVEAVIDGVKAGLKDYQVKINLIGIMSRSFGQAACTQELEGLLAHKQHLVAMDLAGDELGFPGELFNEHFKRVRDAGLAITAHAGEAAGSQSMWQAIQELGATRIGHGVNAIHDPKLMEYLAKHRIGIESCPTSNLHTSTVSSYAEHPFRTFMDAGVLISLNTDDPGVSAIDIKHEYRIAKSELRLSDAELAQVQRNGVEMAFLSESERKALYAAKA.

Residues histidine 12 and histidine 14 each coordinate Zn(2+). The substrate site is built by histidine 14, aspartate 16, and glycine 170. A Zn(2+)-binding site is contributed by histidine 197. The active-site Proton donor is glutamate 200. Residue aspartate 278 participates in Zn(2+) binding. Substrate is bound at residue aspartate 279.

This sequence belongs to the metallo-dependent hydrolases superfamily. Adenosine and AMP deaminases family. Adenosine deaminase subfamily. The cofactor is Zn(2+).

It catalyses the reaction adenosine + H2O + H(+) = inosine + NH4(+). It carries out the reaction 2'-deoxyadenosine + H2O + H(+) = 2'-deoxyinosine + NH4(+). Functionally, catalyzes the hydrolytic deamination of adenosine and 2-deoxyadenosine. The chain is Adenosine deaminase from Shewanella sp. (strain MR-4).